A 210-amino-acid chain; its full sequence is dITP/XTP pyrophosphatase (210 aa).

16-21 (SNNKGK) is a binding site for substrate. Asp-79 serves as the catalytic Proton acceptor. Asp-79 serves as a coordination point for Mg(2+). Substrate is bound by residues Ser-80, 166–169 (FGYD), Lys-189, and 194–195 (HR).

It belongs to the HAM1 NTPase family. Homodimer. The cofactor is Mg(2+).

The enzyme catalyses XTP + H2O = XMP + diphosphate + H(+). It catalyses the reaction dITP + H2O = dIMP + diphosphate + H(+). The catalysed reaction is ITP + H2O = IMP + diphosphate + H(+). Its function is as follows. Pyrophosphatase that catalyzes the hydrolysis of nucleoside triphosphates to their monophosphate derivatives, with a high preference for the non-canonical purine nucleotides XTP (xanthosine triphosphate), dITP (deoxyinosine triphosphate) and ITP. Seems to function as a house-cleaning enzyme that removes non-canonical purine nucleotides from the nucleotide pool, thus preventing their incorporation into DNA/RNA and avoiding chromosomal lesions. The polypeptide is dITP/XTP pyrophosphatase (Acinetobacter baylyi (strain ATCC 33305 / BD413 / ADP1)).